A 504-amino-acid polypeptide reads, in one-letter code: 2-isopropylmalate synthase (504 aa).

Residues 6-267 (IIIFDTTLRD…YTGIISKEIY (262 aa)) form the Pyruvate carboxyltransferase domain. Mn(2+)-binding residues include Asp15, His201, His203, and Asn237. The tract at residues 391-504 (EITDLLQSSG…LNSYLRIHKN (114 aa)) is regulatory domain.

Belongs to the alpha-IPM synthase/homocitrate synthase family. LeuA type 1 subfamily. In terms of assembly, homodimer. It depends on Mn(2+) as a cofactor.

It localises to the cytoplasm. The catalysed reaction is 3-methyl-2-oxobutanoate + acetyl-CoA + H2O = (2S)-2-isopropylmalate + CoA + H(+). It participates in amino-acid biosynthesis; L-leucine biosynthesis; L-leucine from 3-methyl-2-oxobutanoate: step 1/4. Its function is as follows. Catalyzes the condensation of the acetyl group of acetyl-CoA with 3-methyl-2-oxobutanoate (2-ketoisovalerate) to form 3-carboxy-3-hydroxy-4-methylpentanoate (2-isopropylmalate). This chain is 2-isopropylmalate synthase, found in Campylobacter concisus (strain 13826).